The following is a 124-amino-acid chain: Large ribosomal subunit protein eL22y (124 aa).

The protein belongs to the eukaryotic ribosomal protein eL22 family.

The polypeptide is Large ribosomal subunit protein eL22y (RPL22C) (Arabidopsis thaliana (Mouse-ear cress)).